Reading from the N-terminus, the 244-residue chain is T-cell immunoreceptor with Ig and ITIM domains (244 aa).

The signal sequence occupies residues 1–21 (MRWCLLLIWAQGLRQAPLASG). The 103-residue stretch at 22–124 (MMTGTIETTG…DGTYTGRIFL (103 aa)) folds into the Ig-like V-type domain. Residues 22–141 (MMTGTIETTG…AEHGARFQIP (120 aa)) are Extracellular-facing. N-linked (GlcNAc...) asparagine glycosylation is found at N32 and N101. Residues 32-42 (NISAEKGGSII) are homodimerization. Cysteines 45 and 108 form a disulfide. The chain crosses the membrane as a helical span at residues 142-162 (LLGAMAATLVVICTAVIVVVA). The Cytoplasmic segment spans residues 163-244 (LTRKKKALRI…GNCSFFTETG (82 aa)). Y225 carries the post-translational modification Phosphotyrosine. The ITIM motif signature appears at 229–234 (LSYRSL).

As to quaternary structure, homodimer in cis; binds with high affinity to PVR, forming a heterotetrameric assembly of two TIGIT and two PVR molecules. Binds with lower affinity to NECTIN2 and NECTIN3. Interacts with GRB2. Interacts with NECTIN4. In terms of tissue distribution, expressed at low levels on peripheral memory and regulatory CD4+ T-cells and NK cells and is up-regulated following activation of these cells (at protein level).

The protein resides in the cell membrane. Its function is as follows. Inhibitory receptor that plays a role in the modulation of immune responses. Suppresses T-cell activation by promoting the generation of mature immunoregulatory dendritic cells. Upon binding to its ligands PVR/CD155 or NECTIN2/CD112, which are expressed on antigen-presenting cells, sends inhibitory signals to the T-cell or NK cell. Mechanistically, interaction with ligand leads to phosphorylation of the cytoplasmic tail by Src family tyrosine kinases such as FYN or LCK, allowing subsequent binding to adapter GRB2 and SHIP1/INPP5D. In turn, inhibits PI3K and MAPK signaling cascades. In addition, associates with beta-arrestin-2/ARRB2 to recruit SHIP1/INPP5D that suppresses autoubiquitination of TRAF6 and subsequently inhibits NF-kappa-B signaling pathway. Also acts as a receptor for NECTIN4 to inhibit NK cell cytotoxicity. This chain is T-cell immunoreceptor with Ig and ITIM domains (TIGIT), found in Homo sapiens (Human).